The primary structure comprises 481 residues: 2-succinylbenzoate--CoA ligase (481 aa).

It belongs to the ATP-dependent AMP-binding enzyme family. MenE subfamily.

The catalysed reaction is 2-succinylbenzoate + ATP + CoA = 2-succinylbenzoyl-CoA + AMP + diphosphate. It functions in the pathway quinol/quinone metabolism; 1,4-dihydroxy-2-naphthoate biosynthesis; 1,4-dihydroxy-2-naphthoate from chorismate: step 5/7. Its pathway is quinol/quinone metabolism; menaquinone biosynthesis. In terms of biological role, converts 2-succinylbenzoate (OSB) to 2-succinylbenzoyl-CoA (OSB-CoA). The sequence is that of 2-succinylbenzoate--CoA ligase from Bacillus cytotoxicus (strain DSM 22905 / CIP 110041 / 391-98 / NVH 391-98).